The primary structure comprises 135 residues: Probable disulfide formation protein (135 aa).

A helical membrane pass occupies residues 7 to 26 (SYCLYFAWLVSCIGTLMSVY). Cysteine 36 and cysteine 39 form a disulfide bridge. 2 helical membrane-spanning segments follow: residues 41–60 (YQRI…AYLD) and 67–84 (YALP…YQVC). Cysteine 96 and cysteine 101 are oxidised to a cystine. The helical transmembrane segment at 109–131 (GFITMPMASALAFFAIANLLIFA) threads the bilayer.

It belongs to the DsbB family. BdbC subfamily.

It localises to the cell inner membrane. In terms of biological role, required for disulfide bond formation in some proteins. In Chlamydia muridarum (strain MoPn / Nigg), this protein is Probable disulfide formation protein.